Consider the following 180-residue polypeptide: Large ribosomal subunit protein uL5 (180 aa).

It belongs to the universal ribosomal protein uL5 family. As to quaternary structure, part of the 50S ribosomal subunit; part of the 5S rRNA/L5/L18/L25 subcomplex. Contacts the 5S rRNA and the P site tRNA. Forms a bridge to the 30S subunit in the 70S ribosome.

This is one of the proteins that bind and probably mediate the attachment of the 5S RNA into the large ribosomal subunit, where it forms part of the central protuberance. In the 70S ribosome it contacts protein S13 of the 30S subunit (bridge B1b), connecting the 2 subunits; this bridge is implicated in subunit movement. Contacts the P site tRNA; the 5S rRNA and some of its associated proteins might help stabilize positioning of ribosome-bound tRNAs. This Rubrobacter xylanophilus (strain DSM 9941 / JCM 11954 / NBRC 16129 / PRD-1) protein is Large ribosomal subunit protein uL5.